Consider the following 878-residue polypeptide: Aconitase htyD (878 aa).

Substrate-binding positions include Gln173 and 290 to 292; that span reads DSH. Residues Cys472, Cys535, and Cys538 each contribute to the [4Fe-4S] cluster site. Positions 558 and 563 each coordinate substrate. The tract at residues 626-671 is disordered; that stretch reads IAIANQRTKPAPTMPAYVEPYRSFQPPVPPSSDQPQSMKDHGKTSN. 742 to 743 contributes to the substrate binding site; the sequence is SR.

It belongs to the aconitase/IPM isomerase family.

It functions in the pathway antifungal biosynthesis. Aconitase; part of the gene cluster that mediates the de novo generation of L-homotyrosine from acetyl-CoA and 4-hydroxyphenyl-pyruvate. L-homotyrosine is a building block of echinocandin B, a fungal lipidated cyclic hexapeptide that acts as an antifungal agent. L-homotyrosine 4-hydroxyphenyl-pyruvate first undergoes an aldol-type condensation by htyA with the C-2 of acetyl-CoA followed by the release of CoA to form 2-(4-hydroxybenzyl)-malate. This is followed by isomerization of 2-(4-hydroxy-benzyl)-malate to 3-(4-hydroxybenzyl)-malate by htyD. Thereafter, 3-(4-hydroxybenzyl)-malate undergoes decarboxylation and oxidation to form 2-oxo-4-(4-hydroxybenzyl)butanoic acid, coupled to reduction of NAD(+) to NADH by htyC. The product then undergoes transamination catalyzed by htyB to form L-homotyrosine. This chain is Aconitase htyD, found in Aspergillus rugulosus (Emericella rugulosa).